Here is a 140-residue protein sequence, read N- to C-terminus: Putative nickel-responsive regulator (140 aa).

Residues His-81, His-92, His-94, and Cys-100 each contribute to the Ni(2+) site.

Belongs to the transcriptional regulatory CopG/NikR family. Ni(2+) serves as cofactor.

Functionally, transcriptional regulator. This is Putative nickel-responsive regulator from Methanococcoides burtonii (strain DSM 6242 / NBRC 107633 / OCM 468 / ACE-M).